Consider the following 381-residue polypeptide: Prolargin (381 aa).

Residues 1-21 (MRSSLCWLLTLLLILATAAQG) form the signal peptide. Residues 19–65 (AQGQPTRRPRPRPRPRPRPRLRPTPSFPQPDEPTEPTDLPPPLPPGP) form a disordered region. Residues 25-39 (RRPRPRPRPRPRPRL) are compositionally biased toward basic residues. Over residues 56–65 (DLPPPLPPGP) the composition is skewed to pro residues. LRR repeat units follow at residues 94–113 (RKVPVIPSRIHYLYLQNNFI), 114–137 (TELPVESFKNATGLRWINLDNNRI), 138–161 (RKVDQRVLEKLPSLVFLYLEKNQL), 162–182 (EEVPAALPRNLEQLRLSQNQI), 183–206 (SRIPPGVFSKLENLLLLDLQHNKL), 207–232 (SDGVFKPDTFQGLKNLMQLNLAHNTL), 233–253 (RKMPPKVPSAIHQLYLDSNRI), 254–277 (EAIPSGYFKGFPNLAFIRLNYNQL), 278–302 (SDRGLPKNSFNISNLLVLHLSHNRI), 303–322 (SSVPAISSRLEHLYLNNNSI), 323–361 (EKINGTQICPNNIVAFHDFSSDLEHVPHLRYLRLDGNYL), and 362–381 (KPPIPLDLMMCFRLLQSVVI). The N-linked (GlcNAc...) asparagine glycan is linked to N123. N288, N319, and N326 each carry an N-linked (GlcNAc...) asparagine glycan. C331 and C372 are joined by a disulfide.

The protein belongs to the small leucine-rich proteoglycan (SLRP) family. SLRP class II subfamily. Binds the basement membrane heparan sulfate proteoglycan perlecan and triple helical collagens type I and type II. In terms of processing, glycosylated; contains heparan sulfate.

It is found in the secreted. Its subcellular location is the extracellular space. The protein localises to the extracellular matrix. May anchor basement membranes to the underlying connective tissue. This chain is Prolargin (PRELP), found in Bos taurus (Bovine).